The chain runs to 142 residues: Large ribosomal subunit protein uL13 (142 aa).

Belongs to the universal ribosomal protein uL13 family. As to quaternary structure, part of the 50S ribosomal subunit.

Functionally, this protein is one of the early assembly proteins of the 50S ribosomal subunit, although it is not seen to bind rRNA by itself. It is important during the early stages of 50S assembly. This is Large ribosomal subunit protein uL13 from Histophilus somni (Haemophilus somnus).